The chain runs to 407 residues: MEPHRPNVKTAVPLSLESYHISEEYGFLLPDSLKELPDHYRPWMEIANKLPQLIDAHQLQAHVDKMPLLSCQFLKGHREQRLAHLVLSFLTMGYVWQEGEAQPAEVLPRNLALPFVEVSRNLGLPPILVHSDLVLTNWTKKDPDGFLEIGNLETIISFPGGESLHGFILVTALVEKEAVPGIKALVQATNAILQPNQEALLQALQRLRLSIQDITKTLGQMHDYVDPDIFYAGIRIFLSGWKDNPAMPAGLMYEGVSQEPLKYSGGSAAQSTVLHAFDEFLGIRHSKESGDFLYRMRDYMPPSHKAFIEDIHSAPSLRDYILSSGQDHLLTAYNQCVQALAELRSYHITMVTKYLITAAAKAKHGKPNHLPGPPQALKDRGTGGTAVMSFLKSVRDKTLESILHPRG.

A heme-binding site is contributed by histidine 347.

It belongs to the indoleamine 2,3-dioxygenase family. It depends on heme as a cofactor. As to expression, detected in liver, small intestine, spleen, placenta, thymus, lung, brain, kidney, and colon. Also expressed at low level in testis and thyroid. Not expressed in the majority of human tumor samples (&gt;99%).

It carries out the reaction L-tryptophan + O2 = N-formyl-L-kynurenine. Its pathway is amino-acid degradation; L-tryptophan degradation via kynurenine pathway; L-kynurenine from L-tryptophan: step 1/2. Its activity is regulated as follows. Activity is inhibited by D-1MT (1-methyl-D-tryptophan) and MTH-trp (methylthiohydantoin-DL-tryptophan) but not L-1MT (1-methyl-L-tryptophan). Catalyzes the first and rate limiting step of the catabolism of the essential amino acid tryptophan along the kynurenine pathway. Involved in immune regulation. May not play a significant role in tryptophan-related tumoral resistance. The chain is Indoleamine 2,3-dioxygenase 2 from Homo sapiens (Human).